We begin with the raw amino-acid sequence, 63 residues long: Large ribosomal subunit protein uL29 (63 aa).

Belongs to the universal ribosomal protein uL29 family.

This is Large ribosomal subunit protein uL29 from Photorhabdus laumondii subsp. laumondii (strain DSM 15139 / CIP 105565 / TT01) (Photorhabdus luminescens subsp. laumondii).